The following is a 433-amino-acid chain: Acetyl-CoA-benzylalcohol acetyltransferase (433 aa).

Catalysis depends on proton acceptor residues His152 and Asp377.

The protein belongs to the plant acyltransferase family.

It carries out the reaction benzyl alcohol + acetyl-CoA = benzyl acetate + CoA. The catalysed reaction is (E)-cinnamyl alcohol + acetyl-CoA = (E)-cinnamyl acetate + CoA. Involved in the biosynthesis of benzyl acetate, a major constituent of the floral scent. Can use benzylalcohol, cinnamylalcohol, 3-cis-hexene-1-ol or heptanol as substrates. Has some activity with 2-phenylethanol and 2-naphtalene-ethanol. The polypeptide is Acetyl-CoA-benzylalcohol acetyltransferase (BEAT) (Clarkia breweri (Fairy fans)).